We begin with the raw amino-acid sequence, 409 residues long: Z-DNA-binding protein 1 (409 aa).

Z-binding domains follow at residues 8-70 (LGTG…SLGG) and 85-147 (SAAQ…TIYR). Residues Lys-17 and Lys-43 each participate in a glycyl lysine isopeptide (Lys-Gly) (interchain with G-Cter in ubiquitin) cross-link. The disordered stretch occupies residues 59–87 (SSPAPATWSLGGDGASGDGAPEIPEDSAA). 2 consecutive short sequence motifs (RIP homotypic interaction motif (RHIM)) follow at residues 183–207 (NSLISISNSKAIQIGHGNVMSRQTI) and 241–265 (LIHLNKSMLRRVQLGHGNEMNLERD). Disordered regions lie at residues 269 to 307 (HPIFSFSSSPPESTTTADPETAFNMQTPEPGPHPEGGTT) and 323 to 369 (GNNN…TPSD). Residues 270-290 (PIFSFSSSPPESTTTADPETA) show a composition bias toward low complexity. Over residues 337 to 351 (GTKESADSQELKEDT) the composition is skewed to basic and acidic residues.

Homodimer. Interacts (via RIP homotypic interaction motif) with RIPK3; leading to RIPK3 activation and necroptosis; interaction is enhanced by CASP6. Interacts (via RIP homotypic interaction motif) with RIPK1. Component of the AIM2 PANoptosome complex, a multiprotein complex that drives inflammatory cell death (PANoptosis). Post-translationally, ubiquitinated; polyubiquitinated following influenza A virus (IAV) infection. Phosphorylated.

Its subcellular location is the cytoplasm. It is found in the nucleus. With respect to regulation, ZBP1-dependent necroptosis is normally inhibited by RIPK1: RIPK1 inhibits the ZBP1-induced activation of RIPK3 via FADD-mediated recruitment of CASP8, which cleaves RIPK1 and limits TNF-induced necroptosis. Functionally, key innate sensor that recognizes and binds Z-RNA structures, which are produced by a number of viruses, such as herpesvirus, orthomyxovirus or flavivirus, and triggers different forms of cell death. ZBP1 acts as an essential mediator of pyroptosis, necroptosis and apoptosis (PANoptosis), an integral part of host defense against pathogens, by activating RIPK3, caspase-8 (CASP8), and the NLRP3 inflammasome. Key activator of necroptosis, a programmed cell death process in response to death-inducing TNF-alpha family members, via its ability to bind Z-RNA: once activated upon Z-RNA-binding, ZBP1 interacts and stimulates RIPK3 kinase, which phosphorylates and activates MLKL, triggering execution of programmed necrosis. In addition to TNF-induced necroptosis, necroptosis can also take place in the nucleus in response to orthomyxoviruses infection: ZBP1 recognizes and binds Z-RNA structures that are produced in infected nuclei by orthomyxoviruses, such as the influenza A virus (IAV), leading to ZBP1 activation, RIPK3 stimulation and subsequent MLKL phosphorylation, triggering disruption of the nuclear envelope and leakage of cellular DNA into the cytosol. ZBP1-dependent cell death in response to IAV infection promotes interleukin-1 alpha (IL1A) induction in an NLRP3-inflammasome-independent manner: IL1A expression is required for the optimal interleukin-1 beta (IL1B) production, and together, these cytokines promote infiltration of inflammatory neutrophils to the lung, leading to the formation of neutrophil extracellular traps. In addition to its direct role in driving necroptosis via its ability to sense Z-RNAs, also involved in PANoptosis triggered in response to bacterial infection: component of the AIM2 PANoptosome complex, a multiprotein complex that triggers PANoptosis. Also acts as the apical sensor of fungal infection responsible for activating PANoptosis. Involved in CASP8-mediated cell death via its interaction with RIPK1 but independently of its ability to sense Z-RNAs. In some cell types, also able to restrict viral replication by promoting cell death-independent responses. In response to flavivirus infection in neurons, promotes a cell death-independent pathway that restricts viral replication: together with RIPK3, promotes a death-independent transcriptional program that modifies the cellular metabolism via up-regulation expression of the enzyme ACOD1/IRG1 and production of the metabolite itaconate. Itaconate inhibits the activity of succinate dehydrogenase, generating a metabolic state in neurons that suppresses replication of viral genomes. This is Z-DNA-binding protein 1 from Rattus norvegicus (Rat).